The primary structure comprises 250 residues: Proteasome subunit alpha (250 aa).

Belongs to the peptidase T1A family. The 20S proteasome core is composed of 14 alpha and 14 beta subunits that assemble into four stacked heptameric rings, resulting in a barrel-shaped structure. The two inner rings, each composed of seven catalytic beta subunits, are sandwiched by two outer rings, each composed of seven alpha subunits. The catalytic chamber with the active sites is on the inside of the barrel. Has a gated structure, the ends of the cylinder being occluded by the N-termini of the alpha-subunits. Is capped at one or both ends by the proteasome regulatory ATPase, PAN.

The protein resides in the cytoplasm. Its activity is regulated as follows. The formation of the proteasomal ATPase PAN-20S proteasome complex, via the docking of the C-termini of PAN into the intersubunit pockets in the alpha-rings, triggers opening of the gate for substrate entry. Interconversion between the open-gate and close-gate conformations leads to a dynamic regulation of the 20S proteasome proteolysis activity. Functionally, component of the proteasome core, a large protease complex with broad specificity involved in protein degradation. In Haloquadratum walsbyi (strain DSM 16790 / HBSQ001), this protein is Proteasome subunit alpha.